Reading from the N-terminus, the 198-residue chain is Protein LKAAEAR1 (198 aa).

A disordered region spans residues 1–47 (MPTLGVKGARERDKNSASGAGAGAGAGAGAGEKHRKGPRTTDPPKTG). The span at 20-30 (AGAGAGAGAGA) shows a compositional bias: gly residues.

In Mus musculus (Mouse), this protein is Protein LKAAEAR1 (Lkaaear1).